Consider the following 137-residue polypeptide: uncharacterized protein (137 aa).

4 consecutive transmembrane segments (helical) span residues Y20–V39, W44–V61, V86–L105, and A109–Y131.

It is found in the cell membrane. This is an uncharacterized protein from Archaeoglobus fulgidus (strain ATCC 49558 / DSM 4304 / JCM 9628 / NBRC 100126 / VC-16).